Here is a 273-residue protein sequence, read N- to C-terminus: NAD(P)H-hydrate epimerase (273 aa).

Positions 52-260 constitute a YjeF N-terminal domain; it reads AQQIDQELFN…GIIQKYELNL (209 aa). A (6S)-NADPHX-binding site is contributed by 105–109; the sequence is NNGGD. The K(+) site is built by N106 and D170. (6S)-NADPHX-binding positions include 174–180 and D203; that span reads GFSFKGE. S206 lines the K(+) pocket.

The protein belongs to the NnrE/AIBP family. K(+) serves as cofactor.

It carries out the reaction (6R)-NADHX = (6S)-NADHX. The enzyme catalyses (6R)-NADPHX = (6S)-NADPHX. Functionally, catalyzes the epimerization of the S- and R-forms of NAD(P)HX, a damaged form of NAD(P)H that is a result of enzymatic or heat-dependent hydration. This is a prerequisite for the S-specific NAD(P)H-hydrate dehydratase to allow the repair of both epimers of NAD(P)HX. The protein is NAD(P)H-hydrate epimerase of Branchiostoma floridae (Florida lancelet).